The primary structure comprises 713 residues: DNA polymerase eta (713 aa).

The UmuC domain occupies 9–259; the sequence is VALVDMDCFF…MPIRKIRSLG (251 aa). Mg(2+) is bound by residues aspartate 13 and methionine 14. Mn(2+)-binding residues include aspartate 13 and methionine 14. Arginine 61 contacts a 2'-deoxyribonucleoside 5'-triphosphate. Positions 115 and 116 each coordinate Mg(2+). The Mn(2+) site is built by aspartate 115 and glutamate 116. Disordered stretches follow at residues 441–472 and 495–527; these read TSFLSSDPSSLPKVPVTSSEAKTQGSGPAVTA and EASLSSLTAPTQAPMSNSPSKPSLPFQTSQSTG. Composition is skewed to polar residues over residues 456-466 and 497-527; these read VTSSEAKTQGS and SLSSLTAPTQAPMSNSPSKPSLPFQTSQSTG. A UBZ3-type zinc finger spans residues 628–662; sequence AAEDQVPCEKCGSLVPVWDMPEHMDYHFALELQKS. Positions 635, 638, 650, and 654 each coordinate Zn(2+). Residues 677 to 705 form a disordered region; it reads VSHQGKRNPKSPLACTNKRPRPEGMQTLE. Residues lysine 682, lysine 686, and lysine 694 each participate in a glycyl lysine isopeptide (Lys-Gly) (interchain with G-Cter in ubiquitin) cross-link. A PIP-box motif is present at residues 701 to 708; that stretch reads MQTLESFF. A Glycyl lysine isopeptide (Lys-Gly) (interchain with G-Cter in ubiquitin) cross-link involves residue lysine 709.

It belongs to the DNA polymerase type-Y family. As to quaternary structure, interacts with REV1. Interacts with monoubiquitinated PCNA, but not unmodified PCNA. Interacts with POLI; this interaction targets POLI to the replication machinery. Interacts with PALB2 and BRCA2; the interactions are direct and are required to sustain the recruitment of POLH at blocked replication forks and to stimulate POLH-dependent DNA synthesis on D loop substrates. Interacts (via C-terminus) with TRAIP. Interacts with ubiquitin. Interacts with POLDIP2. Mg(2+) is required as a cofactor. The cofactor is Mn(2+). Monoubiquitinated by RCHY1/PIRH2. Ubiquitination depends on integrity of the UBZ3-type zinc finger domain and is enhanced by TRAIP. Ubiquitination inhibits the ability of PolH to interact with PCNA and to bypass UV-induced lesions.

Its subcellular location is the nucleus. It carries out the reaction DNA(n) + a 2'-deoxyribonucleoside 5'-triphosphate = DNA(n+1) + diphosphate. Its activity is regulated as follows. The enzyme in complex with the DNA substrate binds a third divalent metal cation. The binding of this third divalent cation, which is coordinated by water molecules and two oxygen atoms from DNA and dNTP, is essential for catalyzing the DNA synthesis. In terms of biological role, DNA polymerase specifically involved in the DNA repair by translesion synthesis (TLS). Due to low processivity on both damaged and normal DNA, cooperates with the heterotetrameric (REV3L, REV7, POLD2 and POLD3) POLZ complex for complete bypass of DNA lesions. Inserts one or 2 nucleotide(s) opposite the lesion, the primer is further extended by the tetrameric POLZ complex. In the case of 1,2-intrastrand d(GpG)-cisplatin cross-link, inserts dCTP opposite the 3' guanine. Particularly important for the repair of UV-induced pyrimidine dimers. Although inserts the correct base, may cause base transitions and transversions depending upon the context. May play a role in hypermutation at immunoglobulin genes. Forms a Schiff base with 5'-deoxyribose phosphate at abasic sites, but does not have any lyase activity, preventing the release of the 5'-deoxyribose phosphate (5'-dRP) residue. This covalent trapping of the enzyme by the 5'-dRP residue inhibits its DNA synthetic activity during base excision repair, thereby avoiding high incidence of mutagenesis. Targets POLI to replication foci. The sequence is that of DNA polymerase eta (POLH) from Homo sapiens (Human).